Consider the following 173-residue polypeptide: Photosystem I assembly protein Ycf3 (173 aa).

3 TPR repeats span residues 35–68, 72–105, and 120–153; these read AFVYYRDGMSAQAEGEYAEALEYYEEALTLEEDT, GYILYNMGLIYASNGDHDKALELYHQAIELNPRL, and GEKAKEDGDHDGGEALFDQAADYWIRAIRMAPNN.

It belongs to the Ycf3 family.

It localises to the cellular thylakoid membrane. Its function is as follows. Essential for the assembly of the photosystem I (PSI) complex. May act as a chaperone-like factor to guide the assembly of the PSI subunits. In Trichormus variabilis (strain ATCC 29413 / PCC 7937) (Anabaena variabilis), this protein is Photosystem I assembly protein Ycf3.